A 2062-amino-acid polypeptide reads, in one-letter code: Ankyrin repeat domain-containing protein 12 (2062 aa).

2 disordered regions span residues 1-119 and 145-188; these read MPKS…GNKK and ARDN…GETP. The segment covering 9–20 has biased composition (polar residues); it reads PIQSENSDSDSN. Basic and acidic residues-rich tracts occupy residues 41-57 and 100-117; these read PKIE…EKSS and YSEK…EAGN. The span at 145 to 172 shows a compositional bias: polar residues; that stretch reads ARDNSPDSTPNHPSQTTPAQKKTPSSSS. S149 bears the Phosphoserine mark. The segment covering 173–187 has biased composition (basic and acidic residues); sequence RQKDKVNKRNERGET. ANK repeat units lie at residues 184 to 213, 217 to 246, and 250 to 280; these read RGET…NVNV, AGWT…DVNT, and DDDT…PFQA. Disordered stretches follow at residues 301–338, 409–501, 538–577, 609–683, 727–788, 812–1073, 1097–1227, and 1328–1350; these read KREV…TEKD, KSFK…TRIT, ISTG…MSLQ, QKDF…DSAK, EKNI…FTSL, EKHI…LVND, KHKE…RPPV, and EESN…KPEV. Residues 306–318 are compositionally biased toward acidic residues; that stretch reads LSDDDESYTDSEE. Polar residues-rich tracts occupy residues 319–328 and 437–454; these read AQSVNPSSVD and KKIS…NSDM. Residues 455-467 are compositionally biased toward basic and acidic residues; sequence QTKKEYVVSGEHK. A compositionally biased stretch (basic residues) spans 468–480; the sequence is QKGKVKRKLKNQN. A compositionally biased stretch (basic and acidic residues) spans 481 to 498; it reads KNKENQELKQEKEGKENT. S543 carries the phosphoserine modification. Polar residues predominate over residues 565–575; that stretch reads TCLSPGSSEMS. Basic and acidic residues-rich tracts occupy residues 609–631, 639–649, 658–683, 727–784, 812–969, 977–1037, 1061–1072, and 1103–1157; these read QKDF…DHSP, TLKKMDKEGKT, KERE…DSAK, EKNI…KDSE, EKHI…DKES, HIQE…KDKI, KDTRPKEKRLVN, and KQKE…KQPK. A Phosphoserine modification is found at S630. S861 carries the phosphoserine modification. Polar residues predominate over residues 1161–1189; the sequence is SNRSQSVDTKNVMTLGKSSFVSDNSLNRS. Residues 1200-1213 show a composition bias toward low complexity; sequence SSRSVSMISVASSE. The span at 1328–1344 shows a compositional bias: polar residues; it reads EESNQGSLLTVPGDTSP. S1401 bears the Phosphoserine mark. Disordered regions lie at residues 1721–1744 and 1756–1795; these read NAED…NTMA and LLSE…VPQP. Over residues 1729 to 1744 the composition is skewed to polar residues; the sequence is NQIPQRMTRNKANTMA.

Interacts with the PAS region of the p160 coactivators.

The protein localises to the nucleus. Functionally, may recruit HDACs to the p160 coactivators/nuclear receptor complex to inhibit ligand-dependent transactivation. This chain is Ankyrin repeat domain-containing protein 12 (ANKRD12), found in Homo sapiens (Human).